We begin with the raw amino-acid sequence, 475 residues long: UDP-N-acetylmuramate--L-alanine ligase (475 aa).

112–118 (GTHGKTT) provides a ligand contact to ATP.

It belongs to the MurCDEF family.

The protein resides in the cytoplasm. The enzyme catalyses UDP-N-acetyl-alpha-D-muramate + L-alanine + ATP = UDP-N-acetyl-alpha-D-muramoyl-L-alanine + ADP + phosphate + H(+). Its pathway is cell wall biogenesis; peptidoglycan biosynthesis. Cell wall formation. This is UDP-N-acetylmuramate--L-alanine ligase from Paracidovorax citrulli (strain AAC00-1) (Acidovorax citrulli).